We begin with the raw amino-acid sequence, 931 residues long: Netrin receptor UNC5C (931 aa).

The first 40 residues, 1–40 (MRKGLRATAARCGLGLGYLLQMLVLPALALLSASGTGSAA), serve as a signal peptide directing secretion. Over 41-380 (QDDDFFHELP…APDSDDVALY (340 aa)) the chain is Extracellular. The region spanning 62-159 (PHFLIEPEEA…AGTTKSRKAY (98 aa)) is the Ig-like domain. Disulfide bonds link cysteine 83-cysteine 144, cysteine 95-cysteine 142, cysteine 188-cysteine 239, cysteine 272-cysteine 309, cysteine 276-cysteine 313, cysteine 287-cysteine 299, cysteine 328-cysteine 362, cysteine 332-cysteine 367, and cysteine 340-cysteine 352. An Ig-like C2-type domain is found at 161–256 (RIAYLRKTFE…KRKSTTATVI (96 aa)). Asparagine 236 carries an N-linked (GlcNAc...) asparagine glycan. TSP type-1 domains lie at 260–314 (NGGW…TLCP) and 316–368 (DGRW…GLCM). N-linked (GlcNAc...) asparagine glycosylation is present at asparagine 361. Residues 381 to 401 (VGIVIAVIVCLAISVVVALFV) form a helical membrane-spanning segment. At 402 to 931 (YRKNHRDFES…VVSLAAEGQY (530 aa)) the chain is on the cytoplasmic side. Residues 402-931 (YRKNHRDFES…VVSLAAEGQY (530 aa)) are required for netrin-mediated axon repulsion of neuronal growth cones. Serine 502 bears the Phosphoserine mark. A ZU5 domain is found at 530–673 (CTAFGSFNSL…LSTYALVGHS (144 aa)). Residue tyrosine 568 is modified to Phosphotyrosine. The interval 694–712 (SLEYSIRVYCLDDTQDALK) is interaction with DCC. The Death domain maps to 850-929 (QKLCSSLDAP…ETVVSLAAEG (80 aa)).

This sequence belongs to the unc-5 family. As to quaternary structure, interacts with DCC (via cytoplasmic domain). Interacts (tyrosine phosphorylated form) with PTPN11. Interacts (via extracellular domain) with FLRT3 (via extracellular domain). Interacts (via Ig-like C2-type domain) with DSCAM (via extracellular domain). Interacts (via death domain) with DAPK1. Interacts (via cytoplasmic domain) with TUBB3; this interaction is decreased by NTN1/Netrin-1. In terms of processing, proteolytically cleaved by caspases during apoptosis. The cleavage does not take place when the receptor is associated with netrin ligand. Its cleavage by caspases is required to induce apoptosis. Phosphorylated on different cytoplasmic tyrosine residues. Phosphorylation of Tyr-568 leads to an interaction with PTPN11 phosphatase, suggesting that its activity is regulated by phosphorylation/dephosphorylation. Tyrosine phosphorylation is netrin-dependent. Mainly expressed in brain. Expressed in temporal lobe cortical neurons and in neurons of the hippocampal pyramidal layer. Also expressed in kidney. Not expressed in developing or adult lung.

The protein resides in the cell membrane. The protein localises to the cell surface. Its subcellular location is the synapse. It is found in the synaptosome. It localises to the cell projection. The protein resides in the axon. The protein localises to the dendrite. Its subcellular location is the growth cone. It is found in the lamellipodium. It localises to the filopodium. In terms of biological role, receptor for netrin required for axon guidance. Mediates axon repulsion of neuronal growth cones in the developing nervous system upon ligand binding. NTN1/Netrin-1 binding might cause dissociation of UNC5C from polymerized TUBB3 in microtubules and thereby lead to increased microtubule dynamics and axon repulsion. Axon repulsion in growth cones may also be caused by its association with DCC that may trigger signaling for repulsion. Might also collaborate with DSCAM in NTN1-mediated axon repulsion independently of DCC. Also involved in corticospinal tract axon guidance independently of DCC. Involved in dorsal root ganglion axon projection towards the spinal cord. It also acts as a dependence receptor required for apoptosis induction when not associated with netrin ligand. This chain is Netrin receptor UNC5C (UNC5C), found in Homo sapiens (Human).